The chain runs to 155 residues: SsrA-binding protein (155 aa).

The protein belongs to the SmpB family.

It localises to the cytoplasm. Functionally, required for rescue of stalled ribosomes mediated by trans-translation. Binds to transfer-messenger RNA (tmRNA), required for stable association of tmRNA with ribosomes. tmRNA and SmpB together mimic tRNA shape, replacing the anticodon stem-loop with SmpB. tmRNA is encoded by the ssrA gene; the 2 termini fold to resemble tRNA(Ala) and it encodes a 'tag peptide', a short internal open reading frame. During trans-translation Ala-aminoacylated tmRNA acts like a tRNA, entering the A-site of stalled ribosomes, displacing the stalled mRNA. The ribosome then switches to translate the ORF on the tmRNA; the nascent peptide is terminated with the 'tag peptide' encoded by the tmRNA and targeted for degradation. The ribosome is freed to recommence translation, which seems to be the essential function of trans-translation. The polypeptide is SsrA-binding protein (Streptococcus pyogenes serotype M5 (strain Manfredo)).